Consider the following 197-residue polypeptide: MRIYSCHFCSSPVYPGHGIMFVRNDAKEFRFCRSKCHKAFKQRRNPRKLKWTKAFRKAAGKELAVDSTLTFAQRRNVPVRYNRELVETTLKAMTRIEEIRQKRERAFYKNRMKGNTEKDFLRDKKLVESNPELLKMREVELQRQAERAAAGVDEDAEMGDSDEEMEDASEEESEEEEQQQQKIVLKNKKRSAKKIAF.

The tract at residues 144-197 is disordered; it reads QAERAAAGVDEDAEMGDSDEEMEDASEEESEEEEQQQQKIVLKNKKRSAKKIAF. Residues 152–178 are compositionally biased toward acidic residues; it reads VDEDAEMGDSDEEMEDASEEESEEEEQ. A compositionally biased stretch (basic residues) spans 185-197; that stretch reads LKNKKRSAKKIAF.

The protein belongs to the eukaryotic ribosomal protein eL24 family. As to quaternary structure, associated with nucleolar and cytoplasmic pre-60S particles. At the end of biogenesis it dissociates from cytoplasmic pre-60S particles and is likely to be exchanged for its ribosomal homolog, RPL24.

The protein resides in the cytoplasm. It localises to the nucleus. In terms of biological role, involved in the biogenesis of the 60S ribosomal subunit. Ensures the docking of NOG1 to pre-60S particles. Activates and recruits ATPase AFG2 to cytoplasmic pre-60S ribosomal particles. In Eremothecium gossypii (strain ATCC 10895 / CBS 109.51 / FGSC 9923 / NRRL Y-1056) (Yeast), this protein is Ribosome biogenesis protein RLP24 (RLP24).